The following is a 465-amino-acid chain: Monocarboxylate transporter 4 (465 aa).

At 2 to 17 (GGAVVDEGPTGVKAPD) the chain is on the cytoplasmic side. Residues 18–38 (GGWGWAVLFGCFVITGFSYAF) form a helical membrane-spanning segment. At 39-61 (PKAVSVFFKELIQEFGIGYSDTA) the chain is on the extracellular side. Residues 62–82 (WISSILLAMLYGTGPLCSVCV) form a helical membrane-spanning segment. Residues 83–84 (NR) are Cytoplasmic-facing. Residues 85–105 (FGCRPVMLVGGLFASLGMVAA) form a helical membrane-spanning segment. Topologically, residues 106-109 (SFCR) are extracellular. The helical transmembrane segment at 110-130 (SIIQVYLTTGVITGLGLALNF) threads the bilayer. At 131–149 (QPSLIMLNRYFSKRRPMAN) the chain is on the cytoplasmic side. A helical transmembrane segment spans residues 150–170 (GLAAAGSPVFLCALSPLGQLL). Residues 171 to 179 (QDRYGWRGG) are Extracellular-facing. Residues 180 to 200 (FLILGGLLLNCCVCAALMRPL) traverse the membrane as a helical segment. The Cytoplasmic portion of the chain corresponds to 201-227 (VVTAQPGSGPPRPSRRLLDLSVFRDRG). Residues 228–248 (FVLYAVAASVMVLGLFVPPVF) form a helical membrane-spanning segment. The Extracellular portion of the chain corresponds to 249-264 (VVSYAKDLGVPDTKAA). A helical transmembrane segment spans residues 265 to 285 (FLLTILGFIDIFARPAAGFVA). Residues 286–294 (GLGKVRPYS) lie on the Cytoplasmic side of the membrane. A helical transmembrane segment spans residues 295–315 (VYLFSFSMFFNGLADLAGSTA). Topologically, residues 316-317 (GD) are extracellular. Residues 318–338 (YGGLVVFCIFFGISYGMVGAL) form a helical membrane-spanning segment. Residues 339-351 (QFEVLMAIVGTHK) are Cytoplasmic-facing. The chain crosses the membrane as a helical span at residues 352-372 (FSSAIGLVLLMEAVAVLVGPP). Over 373–384 (SGGKLLDATHVY) the chain is Extracellular. The chain crosses the membrane as a helical span at residues 385-405 (MYVFILAGAEVLTSSLILLLG). Residues 406-465 (NFFCIRKKPKEPQPEVAAAEEEKLHKPPADSGVDLREVEHFLKAEPEKNGEVVHTPETSV) are Cytoplasmic-facing. The interval 419–438 (PEVAAAEEEKLHKPPADSGV) is disordered. Basolateral sorting signal regions lie at residues 423–441 (AAEE…VDLR) and 441–465 (REVE…ETSV). The segment covering 425 to 438 (EEEKLHKPPADSGV) has biased composition (basic and acidic residues). Position 436 is a phosphoserine (Ser436). Thr460 is modified (phosphothreonine). At Ser464 the chain carries Phosphoserine.

The protein belongs to the major facilitator superfamily. Monocarboxylate porter (TC 2.A.1.13) family. As to quaternary structure, interacts with BSG; interaction mediates SLC16A3 targeting to the plasma membrane. In terms of tissue distribution, highly expressed in skeletal muscle.

Its subcellular location is the cell membrane. The protein resides in the basolateral cell membrane. It carries out the reaction (S)-lactate(in) + H(+)(in) = (S)-lactate(out) + H(+)(out). The enzyme catalyses pyruvate(out) + H(+)(out) = pyruvate(in) + H(+)(in). Its function is as follows. Proton-dependent transporter of monocarboxylates such as L-lactate and pyruvate. Plays a predominant role in L-lactate efflux from highly glycolytic cells. This Homo sapiens (Human) protein is Monocarboxylate transporter 4 (SLC16A3).